The sequence spans 88 residues: RQC P-site tRNA stabilizing factor (88 aa).

The 67-residue stretch at 1–67 (MRLDKFLKVS…VEITNVKETV (67 aa)) folds into the S4 RNA-binding domain.

Belongs to the RqcP family. In terms of assembly, associates with stalled 50S ribosomal subunits. Binds to RqcH, 23S rRNA and the P-site tRNA. Does not require RqcH for association with 50S subunits.

Its function is as follows. Key component of the ribosome quality control system (RQC), a ribosome-associated complex that mediates the extraction of incompletely synthesized nascent chains from stalled ribosomes and their subsequent degradation. RqcH recruits Ala-charged tRNA, and with RqcP directs the elongation of stalled nascent chains on 50S ribosomal subunits, leading to non-templated C-terminal alanine extensions (Ala tail). The Ala tail promotes nascent chain degradation. RqcP is associated with the translocation-like movement of the peptidyl-tRNA from the A-site into the P-site. The chain is RQC P-site tRNA stabilizing factor from Halalkalibacterium halodurans (strain ATCC BAA-125 / DSM 18197 / FERM 7344 / JCM 9153 / C-125) (Bacillus halodurans).